The primary structure comprises 291 residues: Phosphatidylglycerol--prolipoprotein diacylglyceryl transferase (291 aa).

The next 4 membrane-spanning stretches (helical) occupy residues 24–44 (WYAL…RALL), 64–84 (FILW…VLFY), 99–119 (IWKG…AVIL), and 125–145 (GLPI…GLFL). Residue R147 participates in a 1,2-diacyl-sn-glycero-3-phospho-(1'-sn-glycerol) binding. 3 helical membrane-spanning segments follow: residues 187 to 207 (ATLE…AGAL), 211 to 231 (GLVL…GEFF), and 247 to 267 (MGML…CVAW).

It belongs to the Lgt family.

It localises to the cell inner membrane. It catalyses the reaction L-cysteinyl-[prolipoprotein] + a 1,2-diacyl-sn-glycero-3-phospho-(1'-sn-glycerol) = an S-1,2-diacyl-sn-glyceryl-L-cysteinyl-[prolipoprotein] + sn-glycerol 1-phosphate + H(+). Its pathway is protein modification; lipoprotein biosynthesis (diacylglyceryl transfer). Catalyzes the transfer of the diacylglyceryl group from phosphatidylglycerol to the sulfhydryl group of the N-terminal cysteine of a prolipoprotein, the first step in the formation of mature lipoproteins. The chain is Phosphatidylglycerol--prolipoprotein diacylglyceryl transferase from Nitrobacter hamburgensis (strain DSM 10229 / NCIMB 13809 / X14).